The primary structure comprises 146 residues: VHLTADEKTAVTTLWGKVNVEEVGGEALGRLLVVYPWTQRFFESFGDLSSADAIMGNPKVKAHGKKVLNSFSEGLKNLDNLKGTFAKLSELHCDKLHVDPENFRLLGNVLVCVLAHHFGKEFTPPVQAAYQKVVAGVANALAHKYH.

V1 is subject to N-acetylvaline. Positions 2-146 (HLTADEKTAV…VANALAHKYH (145 aa)) constitute a Globin domain. A Phosphothreonine modification is found at T12. S44 carries the post-translational modification Phosphoserine. At K59 the chain carries N6-acetyllysine. Residue H63 coordinates heme b. Residue K82 is modified to N6-acetyllysine. H92 contacts heme b. Position 93 is an S-nitrosocysteine (C93). The residue at position 144 (K144) is an N6-acetyllysine.

Belongs to the globin family. Heterotetramer of two alpha chains and two beta chains. As to expression, red blood cells.

Functionally, involved in oxygen transport from the lung to the various peripheral tissues. The polypeptide is Hemoglobin subunit beta (HBB) (Procyon lotor (Raccoon)).